The following is a 347-amino-acid chain: GMP reductase (347 aa).

108 to 131 (ADFEKTKQILDLNPALNFVCIDVA) is an NADP(+) binding site. The K(+) site is built by Gly181 and Gly183. Cys186 (thioimidate intermediate) is an active-site residue. 216-239 (IVSDGGCTTPGDVAKAFGGGADFV) is an NADP(+) binding site.

This sequence belongs to the IMPDH/GMPR family. GuaC type 1 subfamily. As to quaternary structure, homotetramer.

The enzyme catalyses IMP + NH4(+) + NADP(+) = GMP + NADPH + 2 H(+). Catalyzes the irreversible NADPH-dependent deamination of GMP to IMP. It functions in the conversion of nucleobase, nucleoside and nucleotide derivatives of G to A nucleotides, and in maintaining the intracellular balance of A and G nucleotides. In Shigella dysenteriae serotype 1 (strain Sd197), this protein is GMP reductase.